The following is a 350-amino-acid chain: Protein SGT1 homolog A (350 aa).

TPR repeat units lie at residues 2–35 (AKEL…DPNC), 37–69 (EFFA…DPSL), and 71–103 (KAYL…TPSE). Positions 149 to 238 (TAKYRHEYYQ…ADIITWASLE (90 aa)) constitute a CS domain. In terms of domain architecture, SGS spans 260–350 (AYPSSKKVKD…DGMELKKWEI (91 aa)).

This sequence belongs to the SGT1 family. Interacts with RAR1. Forms a ternary complex with RAR1 and barley HSP90.

In terms of biological role, functions in R gene-mediated resistance, but participates in a lower extent than SGT1B to RPP5-mediated resistance. Not required for RPM1, RPS2, RPS4 and RPS5-mediated resistance. Probably required for SCF-mediated ubiquitination, by coupling HSP90 to SCF complex for ubiquitination of HSP90 client proteins. In Arabidopsis thaliana (Mouse-ear cress), this protein is Protein SGT1 homolog A (SGT1A).